Consider the following 408-residue polypeptide: DNA primase DnaG (408 aa).

The 79-residue stretch at 165-243 (PELIIVEGRA…KIDYVARAPT (79 aa)) folds into the Toprim domain. Mg(2+) contacts are provided by Glu-171, Asp-216, and Asp-218.

The protein belongs to the archaeal DnaG primase family. As to quaternary structure, forms a ternary complex with MCM helicase and DNA. Component of the archaeal exosome complex. It depends on Mg(2+) as a cofactor.

It carries out the reaction ssDNA + n NTP = ssDNA/pppN(pN)n-1 hybrid + (n-1) diphosphate.. In terms of biological role, RNA polymerase that catalyzes the synthesis of short RNA molecules used as primers for DNA polymerase during DNA replication. Also part of the exosome, which is a complex involved in RNA degradation. Acts as a poly(A)-binding protein that enhances the interaction between heteromeric, adenine-rich transcripts and the exosome. This chain is DNA primase DnaG, found in Sulfurisphaera tokodaii (strain DSM 16993 / JCM 10545 / NBRC 100140 / 7) (Sulfolobus tokodaii).